The following is a 190-amino-acid chain: Imidazoleglycerol-phosphate dehydratase (190 aa).

It belongs to the imidazoleglycerol-phosphate dehydratase family.

It is found in the cytoplasm. The enzyme catalyses D-erythro-1-(imidazol-4-yl)glycerol 3-phosphate = 3-(imidazol-4-yl)-2-oxopropyl phosphate + H2O. Its pathway is amino-acid biosynthesis; L-histidine biosynthesis; L-histidine from 5-phospho-alpha-D-ribose 1-diphosphate: step 6/9. The chain is Imidazoleglycerol-phosphate dehydratase from Methanococcus maripaludis (strain DSM 14266 / JCM 13030 / NBRC 101832 / S2 / LL).